The following is a 108-amino-acid chain: UPF0060 membrane protein YnfA (108 aa).

Over 1–5 (MLKTT) the chain is Periplasmic. A helical membrane pass occupies residues 6–26 (LLFFVTALCEIIGCFLPWLWI). The Cytoplasmic segment spans residues 27 to 30 (KRGA). Residues 31-51 (SVWWLLPAAASLALFVWLLTL) traverse the membrane as a helical segment. At 52–60 (HPAASGRVY) the chain is on the periplasmic side. A helical membrane pass occupies residues 61 to 81 (AAYGGVYVCTALLWLRVVDGV). Residues 82 to 84 (RLT) lie on the Cytoplasmic side of the membrane. Residues 85–105 (VYDWCGALIALCGMLIIVVGW) form a helical membrane-spanning segment. Residues 106–108 (GRT) lie on the Periplasmic side of the membrane.

Belongs to the UPF0060 family.

Its subcellular location is the cell inner membrane. The polypeptide is UPF0060 membrane protein YnfA (Salmonella paratyphi A (strain ATCC 9150 / SARB42)).